Here is a 341-residue protein sequence, read N- to C-terminus: Glyceraldehyde-3-phosphate dehydrogenase (341 aa).

Residues 11-12 (TI) and Gly110 contribute to the NAD(+) site. 139–141 (SCN) contacts D-glyceraldehyde 3-phosphate. Cys140 functions as the Nucleophile in the catalytic mechanism. Residue Arg168 participates in NAD(+) binding. 194–195 (HG) is a binding site for D-glyceraldehyde 3-phosphate. Gln302 contacts NAD(+).

This sequence belongs to the glyceraldehyde-3-phosphate dehydrogenase family. In terms of assembly, homotetramer.

Its subcellular location is the cytoplasm. It carries out the reaction D-glyceraldehyde 3-phosphate + phosphate + NADP(+) = (2R)-3-phospho-glyceroyl phosphate + NADPH + H(+). It catalyses the reaction D-glyceraldehyde 3-phosphate + phosphate + NAD(+) = (2R)-3-phospho-glyceroyl phosphate + NADH + H(+). Its pathway is carbohydrate degradation; glycolysis; pyruvate from D-glyceraldehyde 3-phosphate: step 1/5. The protein is Glyceraldehyde-3-phosphate dehydrogenase of Methanoculleus marisnigri (strain ATCC 35101 / DSM 1498 / JR1).